A 555-amino-acid polypeptide reads, in one-letter code: Branched-chain-amino-acid aminotransferase-like protein 1 (555 aa).

Belongs to the class-IV pyridoxal-phosphate-dependent aminotransferase family.

This is Branched-chain-amino-acid aminotransferase-like protein 1 from Arabidopsis thaliana (Mouse-ear cress).